Here is a 410-residue protein sequence, read N- to C-terminus: Cytosolic isocitrate dehydrogenase [NADP] (410 aa).

NADP(+) is bound by residues 77–79 and R84; that span reads TIT. T79 provides a ligand contact to substrate. Substrate is bound by residues 96 to 102, R111, and R134; that span reads SPNGTIR. K260 provides a ligand contact to NADP(+). Residues D275 and D279 each coordinate Mn(2+). NADP(+) is bound by residues 310–315 and N328; that span reads GTVTRH.

Belongs to the isocitrate and isopropylmalate dehydrogenases family. It depends on Mg(2+) as a cofactor. Mn(2+) serves as cofactor.

The protein resides in the cytoplasm. Its subcellular location is the cytosol. It catalyses the reaction D-threo-isocitrate + NADP(+) = 2-oxoglutarate + CO2 + NADPH. Its function is as follows. May supply 2-oxoglutarate for amino acid biosynthesis and ammonia assimilation via the glutamine synthetase/glutamate synthase (GS/GOGAT) pathway. May be involved in the production of NADPH to promote redox signaling or homeostasis in response to oxidative stress, or redox signaling linked to defense responses. The chain is Cytosolic isocitrate dehydrogenase [NADP] from Arabidopsis thaliana (Mouse-ear cress).